Here is a 950-residue protein sequence, read N- to C-terminus: Nonsense-mediated mRNA decay factor SMG8 (950 aa).

Disordered regions lie at residues 560-607 and 624-651; these read HTGK…LSPT and NESQ…ADTE. The segment covering 568–582 has biased composition (acidic residues); it reads QDEDGEEDAEDEEGQ. Polar residues predominate over residues 593-607; it reads QNTASNGCSQPLSPT. Residues 624–648 are compositionally biased toward low complexity; the sequence is NESQASSEQLSNSEQNSTSSGTSSA.

Belongs to the SMG8 family.

In terms of biological role, involved in nonsense-mediated decay (NMD) of mRNAs containing premature stop codons. Probable component of kinase complex containing nonC and recruited to stalled ribosomes. The sequence is that of Nonsense-mediated mRNA decay factor SMG8 from Drosophila yakuba (Fruit fly).